The chain runs to 248 residues: Small ribosomal subunit protein uS2 (248 aa).

This sequence belongs to the universal ribosomal protein uS2 family.

The chain is Small ribosomal subunit protein uS2 from Alkalilimnicola ehrlichii (strain ATCC BAA-1101 / DSM 17681 / MLHE-1).